The chain runs to 735 residues: Ion-translocating oxidoreductase complex subunit C (735 aa).

4Fe-4S ferredoxin-type domains are found at residues 368–397 (MGAPQEEKSCIRCSACADACPADLLPQQLY) and 407–436 (KATAHHIADCIECGACAWVCPSNIPLVQYF). [4Fe-4S] cluster contacts are provided by cysteine 377, cysteine 380, cysteine 383, cysteine 387, cysteine 416, cysteine 419, cysteine 422, and cysteine 426. The disordered stretch occupies residues 538–715 (KQAAHPMADS…PADPRKAAVA (178 aa)). Over residues 556–565 (KAAVEAAIAR) the composition is skewed to low complexity.

This sequence belongs to the 4Fe4S bacterial-type ferredoxin family. RnfC subfamily. In terms of assembly, the complex is composed of six subunits: RsxA, RsxB, RsxC, RsxD, RsxE and RsxG. The cofactor is [4Fe-4S] cluster.

Its subcellular location is the cell inner membrane. Functionally, part of a membrane-bound complex that couples electron transfer with translocation of ions across the membrane. Required to maintain the reduced state of SoxR. The chain is Ion-translocating oxidoreductase complex subunit C from Salmonella typhimurium (strain LT2 / SGSC1412 / ATCC 700720).